Consider the following 295-residue polypeptide: MASFMRSLFSDHSRYVESFRRFLNNSTEHQCMQEFMDKKLPGIIARIGETKAEIKILSIGGGAGEIDLQILSKVQAQYPGICINNEVVEPNAEQIVKYKELVAKTSNMENIKFAWHKETSSEYQKRVVEEDEEPPKWDFIHMIQMLYYVKDIPATLKFFHGLLAANAKILIILVSGTSGWEKLWKKYGFRLPRDDLCQYVTSSDLAQILDDLGIKYECYDLLSTMDITDCFIDGNENGDLLWDFLTETCNFIKTAPLDLKEEIMKDLQEPEFSVKKEGKVLFNNNLSFIVVEANV.

Blocked amino end (Ala) is present on A2. E28 is a substrate binding site. The S-adenosyl-L-methionine site is built by G60, E89, Q94, S120, and I143. N284 serves as a coordination point for substrate.

Belongs to the class I-like SAM-binding methyltransferase superfamily. HNMT family. As to quaternary structure, monomer.

It is found in the cytoplasm. The enzyme catalyses histamine + S-adenosyl-L-methionine = N(tau)-methylhistamine + S-adenosyl-L-homocysteine + H(+). Inactivates histamine by N-methylation. Plays an important role in degrading histamine and in regulating the airway response to histamine. The polypeptide is Histamine N-methyltransferase (Hnmt) (Rattus norvegicus (Rat)).